Consider the following 344-residue polypeptide: Phenylalanine--tRNA ligase alpha subunit (344 aa).

E255 contacts Mg(2+).

This sequence belongs to the class-II aminoacyl-tRNA synthetase family. Phe-tRNA synthetase alpha subunit type 1 subfamily. In terms of assembly, tetramer of two alpha and two beta subunits. The cofactor is Mg(2+).

It localises to the cytoplasm. The catalysed reaction is tRNA(Phe) + L-phenylalanine + ATP = L-phenylalanyl-tRNA(Phe) + AMP + diphosphate + H(+). The polypeptide is Phenylalanine--tRNA ligase alpha subunit (Cytophaga hutchinsonii (strain ATCC 33406 / DSM 1761 / CIP 103989 / NBRC 15051 / NCIMB 9469 / D465)).